Here is a 172-residue protein sequence, read N- to C-terminus: Adenylate kinase isoenzyme 6 (172 aa).

ATP is bound by residues glycine 13, glycine 15, lysine 16, threonine 17, and threonine 18. The NMPbind stretch occupies residues 33–56 (NVGDLAREGQLYDGYDEEYDCPIL). The LID stretch occupies residues 108–118 (NRGYNEKKLKD). Residues arginine 109 and lysine 148 each contribute to the ATP site.

This sequence belongs to the adenylate kinase family. AK6 subfamily. Monomer and homodimer. Interacts with small ribosomal subunit protein uS11. Not a structural component of 43S pre-ribosomes, but transiently interacts with them by binding to uS11. Interacts with COIL (via C-terminus).

It localises to the cytoplasm. Its subcellular location is the nucleus. The protein resides in the nucleoplasm. It is found in the cajal body. It carries out the reaction AMP + ATP = 2 ADP. The enzyme catalyses ATP + H2O = ADP + phosphate + H(+). Functionally, broad-specificity nucleoside monophosphate (NMP) kinase that catalyzes the reversible transfer of the terminal phosphate group between nucleoside triphosphates and monophosphates. Also has ATPase activity. Involved in the late cytoplasmic maturation steps of the 40S ribosomal particles, specifically 18S rRNA maturation. While NMP activity is not required for ribosome maturation, ATPase activity is. Associates transiently with small ribosomal subunit protein uS11. ATP hydrolysis breaks the interaction with uS11. May temporarily remove uS11 from the ribosome to enable a conformational change of the ribosomal RNA that is needed for the final maturation step of the small ribosomal subunit. Its NMP activity may have a role in nuclear energy homeostasis. May be involved in regulation of Cajal body (CB) formation. This Bos taurus (Bovine) protein is Adenylate kinase isoenzyme 6.